Consider the following 1555-residue polypeptide: UDP-glucose:glycoprotein glucosyltransferase 1 (1555 aa).

The N-terminal stretch at 1 to 42 is a signal peptide; the sequence is MGCKGDASGACAAGALPVTGVCYKMGVLVVLTVLWLFSSVKA. Residues asparagine 536 and asparagine 1228 are each glycosylated (N-linked (GlcNAc...) asparagine). Residues 1244–1555 are glucosyltransferase; it reads KTEEVKQDKD…REGPQKREEL (312 aa). Residue serine 1277 is modified to Phosphoserine. The interval 1534–1555 is disordered; it reads GALYKEKTKEPSREGPQKREEL. The Prevents secretion from ER signature appears at 1552–1555; that stretch reads REEL.

This sequence belongs to the glycosyltransferase 8 family. In terms of assembly, monomer as well as in a tight complex with SELENOF. Interacts with METTL23. Part of a large chaperone multiprotein complex comprising DNAJB11, HSP90B1, HSPA5, HYOU, PDIA2, PDIA4, PDIA6, PPIB, SDF2L1, UGGT1 and very small amounts of ERP29, but not, or at very low levels, CALR nor CANX. It depends on Ca(2+) as a cofactor. Mn(2+) serves as cofactor. Higher levels in pancreas, skeletal muscle, kidney, and brain. Low levels in lung and heart.

It localises to the endoplasmic reticulum lumen. Its subcellular location is the endoplasmic reticulum-Golgi intermediate compartment. It carries out the reaction N(4)-(alpha-D-Man-(1-&gt;2)-alpha-D-Man-(1-&gt;2)-alpha-D-Man-(1-&gt;3)-[alpha-D-Man-(1-&gt;2)-alpha-D-Man-(1-&gt;3)-[alpha-D-Man-(1-&gt;2)-alpha-D-Man-(1-&gt;6)]-alpha-D-Man-(1-&gt;6)]-beta-D-Man-(1-&gt;4)-beta-D-GlcNAc-(1-&gt;4)-beta-D-GlcNAc)-L-asparaginyl-[protein] (N-glucan mannose isomer 9A1,2,3B1,2,3) + UDP-alpha-D-glucose = N(4)-(alpha-D-Glc-(1-&gt;3)-alpha-D-Man-(1-&gt;2)-alpha-D-Man-(1-&gt;2)-alpha-D-Man-(1-&gt;3)-[alpha-D-Man-(1-&gt;2)-alpha-D-Man-(1-&gt;3)-[alpha-D-Man-(1-&gt;2)-alpha-D-Man-(1-&gt;6)]-alpha-D-Man-(1-&gt;6)]-beta-D-Man-(1-&gt;4)-beta-D-GlcNAc-(1-&gt;4)-beta-D-GlcNAc)-L-asparaginyl-[protein] + UDP + H(+). Its pathway is protein modification; protein glycosylation. Its activity is regulated as follows. Catalytic activity is enhanced by complex formation with SELENOF. Its function is as follows. Recognizes glycoproteins with minor folding defects. Reglucosylates single N-glycans near the misfolded part of the protein, thus providing quality control for protein folding in the endoplasmic reticulum. Reglucosylated proteins are recognized by calreticulin for recycling to the endoplasmic reticulum and refolding or degradation. This is UDP-glucose:glycoprotein glucosyltransferase 1 (UGGT1) from Homo sapiens (Human).